The primary structure comprises 144 residues: RxLR effector protein PITG_03192 (144 aa).

Residues methionine 1 to alanine 24 form the signal peptide. Residues arginine 49–arginine 58 carry the RxLR-dEER motif. N-linked (GlcNAc...) asparagine glycosylation occurs at asparagine 115. The chain crosses the membrane as a helical span at residues phenylalanine 122–tyrosine 142.

This sequence belongs to the RxLR effector family. As to quaternary structure, interacts with the C-terminal portions the ER-associated potato NAC transcription factors NTP1 and NTP2.

It localises to the secreted. Its subcellular location is the host endoplasmic reticulum membrane. Effector that is required for full virulence. Targets host NTP1 and NTP2 transcription factors and prevents their pathogen-associated molecular pattern (PAMP)-triggered re-localization from the endoplasmic reticulum into the nucleus, where they contribute to prevent disease progression by P.infestans. The polypeptide is RxLR effector protein PITG_03192 (Phytophthora infestans (strain T30-4) (Potato late blight agent)).